Here is a 424-residue protein sequence, read N- to C-terminus: Histidine--tRNA ligase (424 aa).

It belongs to the class-II aminoacyl-tRNA synthetase family. In terms of assembly, homodimer.

It localises to the cytoplasm. It carries out the reaction tRNA(His) + L-histidine + ATP = L-histidyl-tRNA(His) + AMP + diphosphate + H(+). This is Histidine--tRNA ligase from Shigella sonnei (strain Ss046).